The sequence spans 141 residues: Short-chain diamines transporter (141 aa).

A run of 4 helical transmembrane segments spans residues 16–36, 39–59, 76–96, and 103–123; these read VILL…PLEV, TLGI…NHFF, ILHA…MVAY, and WQAI…TFIF.

Belongs to the proteobacterial antimicrobial compound efflux (PACE) (TC 2.A.117) family.

The protein resides in the cell inner membrane. Mediates the efflux of short-chain diamines when energized by an electrochemical gradient. Involved in resistance to the synthetic biocide chlorhexidine, a widely used antiseptic and disinfectant in both hospital and community settings. Interacts directly with chlorhexidine and mediates its efflux via an energy-dependent mechanism. This is Short-chain diamines transporter from Acinetobacter baylyi (strain ATCC 33305 / BD413 / ADP1).